The sequence spans 158 residues: Acetolactate synthase small subunit (158 aa).

The region spanning 4–79 (MIIAKLHNVT…DVIEVADITD (76 aa)) is the ACT domain.

Belongs to the acetolactate synthase small subunit family. In terms of assembly, dimer of large and small chains.

The enzyme catalyses 2 pyruvate + H(+) = (2S)-2-acetolactate + CO2. The protein operates within amino-acid biosynthesis; L-isoleucine biosynthesis; L-isoleucine from 2-oxobutanoate: step 1/4. It functions in the pathway amino-acid biosynthesis; L-valine biosynthesis; L-valine from pyruvate: step 1/4. The polypeptide is Acetolactate synthase small subunit (ilvH) (Lactococcus lactis subsp. lactis (strain IL1403) (Streptococcus lactis)).